The chain runs to 430 residues: MKQMSHLDDIPSTPGKFKPYFHRTRWQSSVAKLAFWSLVFVGLIFIFFYRSPVSSNPADPSRRSLRTYSWGGPAWEKRVRSSARLRTRRGFSVLVTGAAGFVGTHVSAALKRRGDGVLGLDNFNDYYDPSLKRARQALLERSGVFVVEGDINDAALLKKLFEVVPFTHVMHLAAQAGVRYAMENPSSYVHSNIAGFVNLLEVCKSANPQPAIVWASSSSVYGLNTKVPFSEKDRTDQPASLYAATKKAGEEIAHTYNHIYGLSLTGLRFFTVYGPWGRPDMAYFFFTRDILKGKAISIFEGVNHGTVARDFTYIDDIVKGCLGALDTAEKSTGSGGKKRGAAQLRVFNLGNTSPVPVTDLVTILERLLKVKAKRNIMKLPRNGDVQFTHANISSAQRELGYKPTTDLQTGLKKFARWYLGYYNGGKKAAS.

The next 2 membrane-spanning stretches (helical) occupy residues Ser29–Tyr49 and Gly90–Leu110. Ser92–Phe123 contributes to the NAD(+) binding site. Tyr242 serves as the catalytic Proton acceptor.

The protein belongs to the NAD(P)-dependent epimerase/dehydratase family. Homodimer. As to expression, in roots, leaves, siliques, flowers, pollen and stems.

Its subcellular location is the golgi apparatus. The protein resides in the golgi stack membrane. The catalysed reaction is UDP-alpha-D-glucuronate = UDP-alpha-D-galacturonate. Functionally, involved in the synthesis of the negatively charged monosaccharide that forms the backbone of pectic cell wall components. The protein is UDP-glucuronate 4-epimerase 3 (GAE3) of Arabidopsis thaliana (Mouse-ear cress).